Reading from the N-terminus, the 596-residue chain is Chitooligosaccharidolytic beta-N-acetylglucosaminidase (596 aa).

A signal peptide spans 1–23 (MWLQAICIYTVFIIIGCGIPTAA). Residues Asn166, Asn264, and Asn377 are each glycosylated (N-linked (GlcNAc...) asparagine).

Belongs to the glycosyl hydrolase 20 family.

The catalysed reaction is Hydrolysis of terminal non-reducing N-acetyl-D-hexosamine residues in N-acetyl-beta-D-hexosaminides.. In terms of biological role, active during metamorphosis to degrade chitin. The polypeptide is Chitooligosaccharidolytic beta-N-acetylglucosaminidase (Bombyx mori (Silk moth)).